The primary structure comprises 630 residues: 1-deoxy-D-xylulose-5-phosphate synthase (630 aa).

Residues His-75 and 116 to 118 (GHS) contribute to the thiamine diphosphate site. Mg(2+) is bound at residue Asp-147. Thiamine diphosphate contacts are provided by residues 148–149 (GA), Asn-176, Tyr-287, and Glu-367. Asn-176 contacts Mg(2+).

Belongs to the transketolase family. DXPS subfamily. Homodimer. Mg(2+) serves as cofactor. Requires thiamine diphosphate as cofactor.

The catalysed reaction is D-glyceraldehyde 3-phosphate + pyruvate + H(+) = 1-deoxy-D-xylulose 5-phosphate + CO2. It participates in metabolic intermediate biosynthesis; 1-deoxy-D-xylulose 5-phosphate biosynthesis; 1-deoxy-D-xylulose 5-phosphate from D-glyceraldehyde 3-phosphate and pyruvate: step 1/1. Functionally, catalyzes the acyloin condensation reaction between C atoms 2 and 3 of pyruvate and glyceraldehyde 3-phosphate to yield 1-deoxy-D-xylulose-5-phosphate (DXP). In Treponema pallidum (strain Nichols), this protein is 1-deoxy-D-xylulose-5-phosphate synthase.